Reading from the N-terminus, the 34-residue chain is Antimicrobial peptide Alo-1 (34 aa).

3 disulfide bridges follow: C1–C18, C8–C22, and C17–C33.

It is found in the secreted. Has antifungal activity against C.glabrata. This Acrocinus longimanus (Giant harlequin beetle) protein is Antimicrobial peptide Alo-1.